A 36-amino-acid chain; its full sequence is uncharacterized protein (36 aa).

This is an uncharacterized protein from Spiroplasma melliferum (SpV1).